The sequence spans 1379 residues: ABC multidrug transporter MDR2 (1379 aa).

Residues 65-85 traverse the membrane as a helical segment; it reads IALIVIGTIAGIGAGIPFPLL. An ABC transmembrane type-1 1 domain is found at 69-367; that stretch reads VIGTIAGIGA…MAPFMHIFAS (299 aa). Asn-97 is a glycosylation site (N-linked (GlcNAc...) asparagine). 5 helical membrane passes run 119–139, 193–213, 215–235, 301–321, and 336–356; these read VLQV…HTGC, KVGL…VAFL, VATI…MAFG, IQFG…FWQG, and VSVG…FVLS. The 280-residue stretch at 403–682 folds into the ABC transporter 1 domain; the sequence is IELQDVTFNY…DGVYAGMVRL (280 aa). 438-445 contacts ATP; the sequence is GTSGSGKS. Asn-552 and Asn-633 each carry an N-linked (GlcNAc...) asparagine glycan. Residues 738 to 758 form a disordered region; that stretch reads YMPEEADSLPTEPENEKEKPK. The next 4 membrane-spanning stretches (helical) occupy residues 781 to 801, 820 to 840, 901 to 921, and 922 to 942; these read LGLI…VIFG, GMLF…AVIV, IGVL…SHVI, and AWRI…SGVL. In terms of domain architecture, ABC transmembrane type-1 2 spans 781 to 1068; it reads LGLITSIMIG…MFALVPDISK (288 aa). Asn-989 is a glycosylation site (N-linked (GlcNAc...) asparagine). 2 consecutive transmembrane segments (helical) span residues 1008–1028 and 1032–1052; these read FWLS…YWWG and ILAG…LLFS. The region spanning 1135 to 1374 is the ABC transporter 2 domain; the sequence is VQFRNVHFRY…CESYRANVIH (240 aa). 1170–1177 contributes to the ATP binding site; it reads GPSGSGKS.

Belongs to the ABC transporter superfamily. ABCB family. Multidrug resistance exporter (TC 3.A.1.201) subfamily.

The protein localises to the cell membrane. Functionally, pleiotropic ABC efflux transporter that may be involved in the modulation susceptibility to a wide range of unrelated cytotoxic compounds. This chain is ABC multidrug transporter MDR2, found in Trichophyton equinum (strain ATCC MYA-4606 / CBS 127.97) (Horse ringworm fungus).